The following is a 148-amino-acid chain: UPF0756 membrane protein YeaL (148 aa).

Helical transmembrane passes span Ala14–Val34, Leu51–Leu71, Leu86–Met106, and Val121–Val141.

Belongs to the UPF0756 family.

It is found in the cell membrane. The polypeptide is UPF0756 membrane protein YeaL (Shigella flexneri).